A 553-amino-acid chain; its full sequence is Cytokine-like nuclear factor N-PAC (553 aa).

Residues 8–66 (LGDLVWGKLGRYPPWPGKIVNPPKDLKKPRGKKCFFVKFFGTEDHAWIKVEQLKPYHAH) enclose the PWWP domain. 2 stretches are compositionally biased toward basic and acidic residues: residues 92–145 (RAKG…EGKK) and 162–182 (RAQE…KDLT). The tract at residues 92–188 (RAKGKDQTSS…KDLTIPESST (97 aa)) is disordered. Residue Ser130 is modified to Phosphoserine. Lys135 is covalently cross-linked (Glycyl lysine isopeptide (Lys-Gly) (interchain with G-Cter in SUMO2)). Phosphoserine is present on Ser167. Residues 168 to 180 (PRKRGRPPKDEKD) constitute a DNA-binding region (a.T hook). Glycyl lysine isopeptide (Lys-Gly) (interchain with G-Cter in SUMO2) cross-links involve residues Lys176, Lys179, Lys201, and Lys211. The segment at 214-217 (DPHF) is interaction with histone H3. Residues 216–225 (HFHHFLLSQT) form an interaction with KDM1B region. Glycyl lysine isopeptide (Lys-Gly) (interchain with G-Cter in SUMO2) cross-links involve residues Lys227, Lys237, Lys240, and Lys269. The dehydrogenase domain stretch occupies residues 261-553 (GSITPTDKKI…MSAVYRAYIH (293 aa)). 271 to 285 (GFLGLGLMGSGIVSN) serves as a coordination point for NAD(+). Residue Lys302 forms a Glycyl lysine isopeptide (Lys-Gly) (interchain with G-Cter in SUMO2) linkage. NAD(+) contacts are provided by Thr362 and Lys505. Ser540 bears the Phosphoserine mark.

Belongs to the HIBADH-related family. NP60 subfamily. As to quaternary structure, homotetramere. Interacts with MAPK14. Interacts with KDM1B at nucleosomes; this interaction stimulates H3K4me1 and H3K4me2 demethylation. Binds to mononucleosomes. Interacts with GATA4; the interaction is required for a synergistic activation of GATA4 target genes transcription.

The protein resides in the nucleus. Its subcellular location is the chromosome. Functionally, cytokine-like nuclear factor with chromatin gene reader activity involved in chromatin modification and regulation of gene expression. Acts as a nucleosome-destabilizing factor that is recruited to genes during transcriptional activation. Recognizes and binds histone H3 without a preference for specific epigenetic markers and also binds DNA. Interacts with KDM1B and promotes its histone demethylase activity by facilitating the capture of H3 tails, they form a multifunctional enzyme complex that modifies transcribed chromatin and facilitates Pol II transcription through nucleosomes. Stimulates the acetylation of 'Lys-56' of nucleosomal histone H3 (H3K56ac) by EP300. With GATA4, co-binds a defined set of heart development genes and coregulates their expression during cardiomyocyte differentiation. Regulates p38 MAP kinase activity by mediating stress activation of MAPK14/p38alpha and specifically regulating MAPK14 signaling. Indirectly promotes phosphorylation of MAPK14 and activation of ATF2. The phosphorylation of MAPK14 requires upstream activity of MAP2K4 and MAP2K6. This chain is Cytokine-like nuclear factor N-PAC, found in Homo sapiens (Human).